A 234-amino-acid chain; its full sequence is CD-NTase-associated protein 13 (234 aa).

Residues 20–42 traverse the membrane as a helical segment; that stretch reads TIMKNVIANVSTAITLALMILWI.

The protein in the C-terminal section; belongs to the bacterial STING family.

It is found in the cell inner membrane. Functionally, effector protein of a CBASS antivirus system. CBASS (cyclic oligonucleotide-based antiphage signaling system) provides immunity against bacteriophage. The CD-NTase protein synthesizes cyclic nucleotides in response to infection; these serve as specific second messenger signals. The signals activate a diverse range of effectors, leading to bacterial cell death and thus abortive phage infection. A type I-D CBASS(GG) system. Its function is as follows. Binds c-di-GMP (synthesized by the cognate CdnE encoded upstream in the same operon) and about 10-fold less well 3'3'-cGAMP, but not c-di-AMP, 2'3'-cGAMP or cUMP-AMP (tested with a protein without the transmembrane region). The effector protein for this CBASS system, its activity is stimulated by c-di-GMP and leads to cell death. In Roseivirga ehrenbergii (strain DSM 102268 / JCM 13514 / KCTC 12282 / NCIMB 14502 / KMM 6017), this protein is CD-NTase-associated protein 13.